The primary structure comprises 591 residues: MKKYPKIGIRPTIDGRQGGVRESLEDKTMNLAKAVAELISSNLKNGDGSPVECVIADSTIGRVAESAACAEKFEREGVGATITVTSCWCYGSETMDMHPHWPKAVWGFNGTERPGAVYLAAVLAGHAQKGLPAFGIYGHDVQDLDDNTIPADVAEKLLRFARAAMAVANMRGKSYLSFGSVCMGIAGSIVDPDFFQEYLGIRNESVDETEILRRMEEGIYDHEEYAKAMAWTEKYCKPNEGEDFKNRPEKRKTREEKDADWEFIVKMTIIMRDLMVGNPKLLEMGFKEEAIGHNAIAAGFQGQRQWTDWKPNGDFSEALLNTTFDWNGIREAYVLATENDACNGVAMLFGHLLSGCGQMFSDIRTYWSPEAVKRVTGKELTGMAKNGIIHLINSGATTLDATGESHNEAGEPCMKPNWEMTEADVEACLKATTWYPADRDYFRGGGFSSNFLSKGGMPVTMMRLNLVKGLGPVLQLAEGWTVDIDPEIHQVLNMRTDPTWPTTWFVPRLCDKPAFRDVYSVMNNWGANHGAISYGHIGQDLITLASMLRIPVCMHNVEDDKIFRPASWNAFGMDKEGSDYRACSTYGPIYK.

Active-site proton acceptor residues include glutamate 338 and aspartate 362. Mn(2+) is bound by residues glutamate 338, aspartate 362, and histidine 529.

The protein belongs to the L-fucose isomerase family. The cofactor is Mn(2+).

Its subcellular location is the cytoplasm. The catalysed reaction is L-fucose = L-fuculose. It participates in carbohydrate degradation; L-fucose degradation; L-lactaldehyde and glycerone phosphate from L-fucose: step 1/3. Functionally, converts the aldose L-fucose into the corresponding ketose L-fuculose. The polypeptide is L-fucose isomerase (Phocaeicola vulgatus (strain ATCC 8482 / DSM 1447 / JCM 5826 / CCUG 4940 / NBRC 14291 / NCTC 11154) (Bacteroides vulgatus)).